A 352-amino-acid chain; its full sequence is tRNA N6-adenosine threonylcarbamoyltransferase (352 aa).

2 residues coordinate Fe cation: His115 and His119. Residues 138-142 (LVSGG), Asp171, Gly184, and Asn277 each bind substrate. A Fe cation-binding site is contributed by Asp305.

This sequence belongs to the KAE1 / TsaD family. Requires Fe(2+) as cofactor.

The protein resides in the cytoplasm. The catalysed reaction is L-threonylcarbamoyladenylate + adenosine(37) in tRNA = N(6)-L-threonylcarbamoyladenosine(37) in tRNA + AMP + H(+). In terms of biological role, required for the formation of a threonylcarbamoyl group on adenosine at position 37 (t(6)A37) in tRNAs that read codons beginning with adenine. Is involved in the transfer of the threonylcarbamoyl moiety of threonylcarbamoyl-AMP (TC-AMP) to the N6 group of A37, together with TsaE and TsaB. TsaD likely plays a direct catalytic role in this reaction. The chain is tRNA N6-adenosine threonylcarbamoyltransferase from Variovorax paradoxus (strain S110).